The following is a 258-amino-acid chain: Type III pantothenate kinase (258 aa).

Residue 6–13 participates in ATP binding; it reads DVGNTNIV. Substrate-binding positions include Tyr100 and 107-110; that span reads GADR. The Proton acceptor role is filled by Asp109. Asp129 is a binding site for K(+). Thr132 serves as a coordination point for ATP. Thr184 contributes to the substrate binding site.

This sequence belongs to the type III pantothenate kinase family. As to quaternary structure, homodimer. NH4(+) serves as cofactor. Requires K(+) as cofactor.

It is found in the cytoplasm. The catalysed reaction is (R)-pantothenate + ATP = (R)-4'-phosphopantothenate + ADP + H(+). Its pathway is cofactor biosynthesis; coenzyme A biosynthesis; CoA from (R)-pantothenate: step 1/5. In terms of biological role, catalyzes the phosphorylation of pantothenate (Pan), the first step in CoA biosynthesis. The sequence is that of Type III pantothenate kinase from Clostridium botulinum (strain Loch Maree / Type A3).